The sequence spans 168 residues: Lipoprotein signal peptidase (168 aa).

Transmembrane regions (helical) follow at residues 57-77 and 86-106; these read PKEV…LYVF and FILP…DRIT. Active-site residues include aspartate 112 and aspartate 138. A helical transmembrane segment spans residues 131–151; sequence WPIFNIADSAITIGACLLILF.

The protein belongs to the peptidase A8 family.

The protein resides in the cell inner membrane. The enzyme catalyses Release of signal peptides from bacterial membrane prolipoproteins. Hydrolyzes -Xaa-Yaa-Zaa-|-(S,diacylglyceryl)Cys-, in which Xaa is hydrophobic (preferably Leu), and Yaa (Ala or Ser) and Zaa (Gly or Ala) have small, neutral side chains.. The protein operates within protein modification; lipoprotein biosynthesis (signal peptide cleavage). Its function is as follows. This protein specifically catalyzes the removal of signal peptides from prolipoproteins. The protein is Lipoprotein signal peptidase of Chlorobium phaeobacteroides (strain DSM 266 / SMG 266 / 2430).